Consider the following 125-residue polypeptide: Aldolase FrzH (125 aa).

The catalysed reaction is (2S)-3-(4-methoxyphenyl)-2-[(3S)-3-(methylamino)-8-oxo-1-azaspiro[4.5]decan-1-yl]propanal = (1S,3S,6S,7S,8R)-7-hydroxy-6-[(4-methoxyphenyl)methyl]-3-(methylamino)-5-azatricyclo[6.3.1.0(1,5)]dodecan-9-one. It functions in the pathway secondary metabolite biosynthesis. Its function is as follows. Aldolase; part of the gene cluster that mediates the biosynthesis of the alkaloid (-)-FR901483, a potent immunosuppressant that shows efficacy in animal models and a probable inhibitor of purine nucleotide biosynthesis by targeting phosphoribosylpyrophosphate amidotransferase (PPAT). Within the pathway, FrzH is a new kind of aldolase with no similarities to known aldolases, and which catalyzes the intramolecular aldol condensation via formation of a C9-C3' bond to yield an aza-tricyclic product. The biosynthesis of (-)-FR901483 starts with the condensation of two L-tyrosines to yield (S,S)-dityrosyl-piperazine. This process occurs in 3 steps with the non-canonical nonribosomal peptide synthetase FrzA catalyzing the reduction of L-tyrosine into L-tyrosinal, the spontaneous condensation of 2 L-tyrosinal units, and the subsequent reduction by the NmrA-like family domain-containing oxidoreductase FrzB. The cytochrome P450 monooxygenase FrzC then performs coupling between N10 and C1' to morph the piperazine into a 1,4-diazabicyclo[3.2.1]octane spiro-fused to a 2,5-cyclohexadienone. The dienone portion is further reduced to cyclohexanone by the flavin-dependent reductase FrzD. The methyltranserases (MTs) FrzE and FrzF are then involved in the methylation at the C10' amine and the C4 phenolic oxygen, respectively. The order of the two MTs appear to be interchangeable. Cleavage of the C9-N10' bond by the dioxygenase FrzG then leads to formation of a conjugated iminium. In addition to the oxidation of C9, an additional dehydrogenation between C7 and C8 can occur to give a likely shunt product. The next biosynthetic step is the intramolecular aldol condensation catalyzed by the newly identified aldolase FrzH to yield an aza-tricyclic product with the formation of a C9-C3' bond. The short-chain dehydrogenase/reductase FrzI then produces dephospho-(-)-FR901483 that is phosphorylated at C4'-OH into (-)-FR901483 by the phosphotransferase FrzJ. The sequence is that of Aldolase FrzH from Cladobotryum sp.